A 244-amino-acid polypeptide reads, in one-letter code: 1-(5-phosphoribosyl)-5-[(5-phosphoribosylamino)methylideneamino] imidazole-4-carboxamide isomerase (244 aa).

Asp-10 functions as the Proton acceptor in the catalytic mechanism. Asp-132 functions as the Proton donor in the catalytic mechanism.

This sequence belongs to the HisA/HisF family.

Its subcellular location is the cytoplasm. It carries out the reaction 1-(5-phospho-beta-D-ribosyl)-5-[(5-phospho-beta-D-ribosylamino)methylideneamino]imidazole-4-carboxamide = 5-[(5-phospho-1-deoxy-D-ribulos-1-ylimino)methylamino]-1-(5-phospho-beta-D-ribosyl)imidazole-4-carboxamide. It functions in the pathway amino-acid biosynthesis; L-histidine biosynthesis; L-histidine from 5-phospho-alpha-D-ribose 1-diphosphate: step 4/9. The protein is 1-(5-phosphoribosyl)-5-[(5-phosphoribosylamino)methylideneamino] imidazole-4-carboxamide isomerase of Xanthomonas campestris pv. campestris (strain 8004).